Reading from the N-terminus, the 62-residue chain is Ranacyclin-T (62 aa).

The first 22 residues, 1–22, serve as a signal peptide directing secretion; that stretch reads MFTMKKTLLVLFFLGVVSLSLC. Positions 23–43 are excised as a propeptide; that stretch reads VEERDADEEDGGEVMEEEVKR. Cys49 and Cys59 are oxidised to a cystine. Position 60 is a lysine amide (Lys60).

Belongs to the frog skin active peptide (FSAP) family. Brevinin subfamily. As to expression, expressed by the skin granular glands.

The protein resides in the secreted. Its function is as follows. Has antibacterial activity against Gram-positive bacteria B.megaterium Bm11, S.lentus and M.luteus, and Gram-negative bacteria E.coli D22, Y.pseudotuberculosis YP III and P.syringae pv tabaci, and antifungal activity against C.albicans ATCC 10231, C.tropicalis, C.guiller-mondii and P.nicotianae spores. Has weak hemolytic activity. The mature peptide inserts into the hydrophobic core of the bacterial cell membrane and increases permeability without disrupting membrane integrity. Probably binds to the outer membrane surface before aggregating to form transmembrane pores. The sequence is that of Ranacyclin-T (RNCT) from Rana temporaria (European common frog).